The primary structure comprises 418 residues: Serine hydroxymethyltransferase (418 aa).

(6S)-5,6,7,8-tetrahydrofolate-binding positions include Leu-121 and 125–127; that span reads GHL. Lys-230 carries the post-translational modification N6-(pyridoxal phosphate)lysine. (6S)-5,6,7,8-tetrahydrofolate is bound by residues Glu-246 and 355 to 357; that span reads SPF.

This sequence belongs to the SHMT family. As to quaternary structure, homodimer. Pyridoxal 5'-phosphate serves as cofactor.

The protein localises to the cytoplasm. The enzyme catalyses (6R)-5,10-methylene-5,6,7,8-tetrahydrofolate + glycine + H2O = (6S)-5,6,7,8-tetrahydrofolate + L-serine. It functions in the pathway one-carbon metabolism; tetrahydrofolate interconversion. It participates in amino-acid biosynthesis; glycine biosynthesis; glycine from L-serine: step 1/1. Its function is as follows. Catalyzes the reversible interconversion of serine and glycine with tetrahydrofolate (THF) serving as the one-carbon carrier. This reaction serves as the major source of one-carbon groups required for the biosynthesis of purines, thymidylate, methionine, and other important biomolecules. Also exhibits THF-independent aldolase activity toward beta-hydroxyamino acids, producing glycine and aldehydes, via a retro-aldol mechanism. The sequence is that of Serine hydroxymethyltransferase from Streptococcus pneumoniae (strain ATCC 700669 / Spain 23F-1).